We begin with the raw amino-acid sequence, 58 residues long: Temporin-1Th (58 aa).

The signal sequence occupies residues 1-22 (MFTLKKSLLLLFFLGTINLSLC). Residues 23 to 46 (EEERNAEEERRDEPDERDVQVEKR) constitute a propeptide that is removed on maturation. The tract at residues 25 to 46 (ERNAEEERRDEPDERDVQVEKR) is disordered. At leucine 56 the chain carries Leucine amide.

As to expression, expressed by the skin glands.

It is found in the secreted. Antimicrobial peptide that renders both the outer and inner membrane of bacteria permeable to hydrophobic substances of low molecular mass. The protein is Temporin-1Th of Rana temporaria (European common frog).